The chain runs to 363 residues: tRNA/tmRNA (uracil-C(5))-methyltransferase (363 aa).

5 residues coordinate S-adenosyl-L-methionine: glutamine 187, tyrosine 215, asparagine 220, glutamate 236, and aspartate 296. Cysteine 321 acts as the Nucleophile in catalysis. Glutamate 355 (proton acceptor) is an active-site residue.

This sequence belongs to the class I-like SAM-binding methyltransferase superfamily. RNA M5U methyltransferase family. TrmA subfamily.

It catalyses the reaction uridine(54) in tRNA + S-adenosyl-L-methionine = 5-methyluridine(54) in tRNA + S-adenosyl-L-homocysteine + H(+). It carries out the reaction uridine(341) in tmRNA + S-adenosyl-L-methionine = 5-methyluridine(341) in tmRNA + S-adenosyl-L-homocysteine + H(+). Dual-specificity methyltransferase that catalyzes the formation of 5-methyluridine at position 54 (m5U54) in all tRNAs, and that of position 341 (m5U341) in tmRNA (transfer-mRNA). The sequence is that of tRNA/tmRNA (uracil-C(5))-methyltransferase from Pseudomonas aeruginosa (strain UCBPP-PA14).